A 406-amino-acid chain; its full sequence is 4-hydroxy-3-methylbut-2-en-1-yl diphosphate synthase (ferredoxin) (406 aa).

Residues cysteine 315, cysteine 318, cysteine 349, and glutamate 356 each contribute to the [4Fe-4S] cluster site.

Belongs to the IspG family. It depends on [4Fe-4S] cluster as a cofactor.

It catalyses the reaction (2E)-4-hydroxy-3-methylbut-2-enyl diphosphate + 2 oxidized [2Fe-2S]-[ferredoxin] + H2O = 2-C-methyl-D-erythritol 2,4-cyclic diphosphate + 2 reduced [2Fe-2S]-[ferredoxin] + H(+). The protein operates within isoprenoid biosynthesis; isopentenyl diphosphate biosynthesis via DXP pathway; isopentenyl diphosphate from 1-deoxy-D-xylulose 5-phosphate: step 5/6. Its function is as follows. Converts 2C-methyl-D-erythritol 2,4-cyclodiphosphate (ME-2,4cPP) into 1-hydroxy-2-methyl-2-(E)-butenyl 4-diphosphate. The chain is 4-hydroxy-3-methylbut-2-en-1-yl diphosphate synthase (ferredoxin) from Rippkaea orientalis (strain PCC 8801 / RF-1) (Cyanothece sp. (strain PCC 8801)).